Reading from the N-terminus, the 454-residue chain is CCA-adding enzyme (454 aa).

Residues S59 and R62 each coordinate ATP. CTP contacts are provided by S59 and R62. The Mg(2+) site is built by D71, D73, and D125. ATP is bound by residues H148, K167, and Y176. Residues H148, K167, and Y176 each contribute to the CTP site.

This sequence belongs to the tRNA nucleotidyltransferase/poly(A) polymerase family. Archaeal CCA-adding enzyme subfamily. As to quaternary structure, homodimer. Mg(2+) is required as a cofactor.

It catalyses the reaction a tRNA precursor + 2 CTP + ATP = a tRNA with a 3' CCA end + 3 diphosphate. The enzyme catalyses a tRNA with a 3' CCA end + 2 CTP + ATP = a tRNA with a 3' CCACCA end + 3 diphosphate. In terms of biological role, catalyzes the addition and repair of the essential 3'-terminal CCA sequence in tRNAs without using a nucleic acid template. Adds these three nucleotides in the order of C, C, and A to the tRNA nucleotide-73, using CTP and ATP as substrates and producing inorganic pyrophosphate. tRNA 3'-terminal CCA addition is required both for tRNA processing and repair. Also involved in tRNA surveillance by mediating tandem CCA addition to generate a CCACCA at the 3' terminus of unstable tRNAs. While stable tRNAs receive only 3'-terminal CCA, unstable tRNAs are marked with CCACCA and rapidly degraded. In Methanosarcina barkeri (strain Fusaro / DSM 804), this protein is CCA-adding enzyme.